The sequence spans 429 residues: D-amino acid dehydrogenase (429 aa).

3-17 contributes to the FAD binding site; the sequence is VLILGSGVIGTTTAW.

The protein belongs to the DadA oxidoreductase family. Requires FAD as cofactor.

The catalysed reaction is a D-alpha-amino acid + A + H2O = a 2-oxocarboxylate + AH2 + NH4(+). It functions in the pathway amino-acid degradation; D-alanine degradation; NH(3) and pyruvate from D-alanine: step 1/1. Oxidative deamination of D-amino acids. The chain is D-amino acid dehydrogenase from Xanthomonas campestris pv. campestris (strain 8004).